Consider the following 267-residue polypeptide: Dolichol-phosphate mannosyltransferase (267 aa).

N-acetylserine is present on Ser-2. At 2-238 (SIEYSVIVPA…QQLKELYVFK (237 aa)) the chain is on the cytoplasmic side. Positions 10, 12, 14, 42, 44, 95, 96, 97, 99, and 122 each coordinate GDP-alpha-D-mannose. Residues Asp-97 and Gln-99 each contribute to the Mg(2+) site. Positions 97 and 99 each coordinate Mn(2+). Ser-141 carries the post-translational modification Phosphoserine; by PKA. GDP-alpha-D-mannose-binding residues include Lys-183, Arg-212, and Lys-218. The chain crosses the membrane as a helical; Anchor for type IV membrane protein span at residues 239–259 (FGANNLILFITFWSILFFYVC). Over 260–267 (YQLYHLVF) the chain is Lumenal.

This sequence belongs to the glycosyltransferase 2 family. In terms of assembly, interacts with the C-terminus of SAC1, thereby sequestering it to the endoplasmic reticulum in exponentially growing cells. Under nutrient limitation conditions, this interaction is rapidly abolished. The cofactor is Mg(2+). Mn(2+) is required as a cofactor. Requires Ca(2+) as cofactor.

It is found in the endoplasmic reticulum membrane. It carries out the reaction a di-trans,poly-cis-dolichyl phosphate + GDP-alpha-D-mannose = a di-trans,poly-cis-dolichyl beta-D-mannosyl phosphate + GDP. It functions in the pathway protein modification; protein glycosylation. Its activity is regulated as follows. Inhibited by acetylsalicylic acid (aspirin). In terms of biological role, transfers mannose from GDP-mannose to dolichol monophosphate to form dolichol phosphate mannose (Dol-P-Man) which is the mannosyl donor in pathways leading to N-glycosylation, glycosyl phosphatidylinositol membrane anchoring, and O-mannosylation of proteins. This chain is Dolichol-phosphate mannosyltransferase, found in Saccharomyces cerevisiae (strain ATCC 204508 / S288c) (Baker's yeast).